Reading from the N-terminus, the 262-residue chain is Acyl-[acyl-carrier-protein]--UDP-N-acetylglucosamine O-acyltransferase (262 aa).

It belongs to the transferase hexapeptide repeat family. LpxA subfamily. In terms of assembly, homotrimer.

It is found in the cytoplasm. It catalyses the reaction a (3R)-hydroxyacyl-[ACP] + UDP-N-acetyl-alpha-D-glucosamine = a UDP-3-O-[(3R)-3-hydroxyacyl]-N-acetyl-alpha-D-glucosamine + holo-[ACP]. It functions in the pathway glycolipid biosynthesis; lipid IV(A) biosynthesis; lipid IV(A) from (3R)-3-hydroxytetradecanoyl-[acyl-carrier-protein] and UDP-N-acetyl-alpha-D-glucosamine: step 1/6. Functionally, involved in the biosynthesis of lipid A, a phosphorylated glycolipid that anchors the lipopolysaccharide to the outer membrane of the cell. This chain is Acyl-[acyl-carrier-protein]--UDP-N-acetylglucosamine O-acyltransferase, found in Burkholderia vietnamiensis (strain G4 / LMG 22486) (Burkholderia cepacia (strain R1808)).